Here is a 139-residue protein sequence, read N- to C-terminus: Translation initiation factor 2 subunit beta (139 aa).

The protein belongs to the eIF-2-beta/eIF-5 family. As to quaternary structure, heterotrimer composed of an alpha, a beta and a gamma chain.

In terms of biological role, eIF-2 functions in the early steps of protein synthesis by forming a ternary complex with GTP and initiator tRNA. The sequence is that of Translation initiation factor 2 subunit beta from Sulfurisphaera tokodaii (strain DSM 16993 / JCM 10545 / NBRC 100140 / 7) (Sulfolobus tokodaii).